The sequence spans 480 residues: Probable GH family 25 lysozyme 3 (480 aa).

The N-terminal stretch at 1–20 (MNKLILSILSVLLIVSIASA) is a signal peptide. The Ch-type lysozyme domain maps to 21–231 (GNGIDISSGT…STTSSSATSS (211 aa)). Catalysis depends on residues aspartate 25, aspartate 114, and glutamate 116. Positions 219–472 (SGSSTTSSSA…SSGSGNYTSG (254 aa)) are enriched in low complexity. Residues 219 to 480 (SGSSTTSSSA…SGSGNGAFLF (262 aa)) form a disordered region. Residues asparagine 423, asparagine 428, asparagine 437, asparagine 446, and asparagine 468 are each glycosylated (N-linked (GlcNAc...) asparagine).

This sequence belongs to the glycosyl hydrolase 25 family.

It localises to the secreted. It catalyses the reaction Hydrolysis of (1-&gt;4)-beta-linkages between N-acetylmuramic acid and N-acetyl-D-glucosamine residues in a peptidoglycan and between N-acetyl-D-glucosamine residues in chitodextrins.. This Dictyostelium discoideum (Social amoeba) protein is Probable GH family 25 lysozyme 3.